The following is a 543-amino-acid chain: Periplasmic oligopeptide-binding protein OppA (543 aa).

An N-terminal signal peptide occupies residues 1–26 (MSNITKKSLIAAGILTALIAASAATA). The cysteines at positions 297 and 443 are disulfide-linked.

It belongs to the bacterial solute-binding protein 5 family. In terms of assembly, the complex is composed of two ATP-binding proteins (OppD and OppF), two transmembrane proteins (OppB and OppC) and a solute-binding protein (OppA).

It is found in the periplasm. Its function is as follows. Part of the ABC transporter complex OppABCDF involved in the uptake of oligopeptides, including the cell wall murein tripeptide L-alanyl-gamma-D-glutamyl-meso-diaminopimelate. Plays an important nutritional role and is involved in the recycling of cell wall peptides. Binds peptides containing from two to five amino acid residues regardless of their sequence. Also binds cell wall peptides, such as L-alanyl-gamma-D-glutamyl-meso-diaminopimelate. This Salmonella typhimurium (strain LT2 / SGSC1412 / ATCC 700720) protein is Periplasmic oligopeptide-binding protein OppA.